The following is a 279-amino-acid chain: MNTENKEITSNWFTNLRDLLCKEFEKIEEKYAQIKGLKPAKFVRTSWKRNGGGCGIMSLMKGEVFEKVGVNISTVFGEFSQEFRSEILGAELDGKFFATGISVVAHLKSPLIPAMHFNTRYIETSKNWFGGGSDLTPFYPEENETAKFHTAFKEACDKYDSSYYPKFKRQCDEYFYLRHRKEPRGVGGIFYDYLNSGNFEQDFAFTRDIGKALLSVYPEIVRSKLFLPWTDEQKEYQLIKRGRYVEFNLLYDRGTKFGLMTDGNIEAILMSLPPVVKFN.

Residue Ser-102 coordinates substrate. A divalent metal cation-binding residues include His-106 and His-116. His-116 (proton donor) is an active-site residue. Residue Asn-118–Arg-120 coordinates substrate. A divalent metal cation contacts are provided by His-149 and His-179. Positions Tyr-244–Asn-279 are important for dimerization.

The protein belongs to the aerobic coproporphyrinogen-III oxidase family. As to quaternary structure, homodimer. Requires a divalent metal cation as cofactor.

It localises to the cytoplasm. It carries out the reaction coproporphyrinogen III + O2 + 2 H(+) = protoporphyrinogen IX + 2 CO2 + 2 H2O. Its pathway is porphyrin-containing compound metabolism; protoporphyrin-IX biosynthesis; protoporphyrinogen-IX from coproporphyrinogen-III (O2 route): step 1/1. Functionally, involved in the heme biosynthesis. Catalyzes the aerobic oxidative decarboxylation of propionate groups of rings A and B of coproporphyrinogen-III to yield the vinyl groups in protoporphyrinogen-IX. This is Oxygen-dependent coproporphyrinogen-III oxidase from Rickettsia typhi (strain ATCC VR-144 / Wilmington).